A 562-amino-acid chain; its full sequence is Arginine--tRNA ligase (562 aa).

Positions 121 to 131 (PNIAKPMGMGH) match the 'HIGH' region motif.

The protein belongs to the class-I aminoacyl-tRNA synthetase family. Monomer.

Its subcellular location is the cytoplasm. The enzyme catalyses tRNA(Arg) + L-arginine + ATP = L-arginyl-tRNA(Arg) + AMP + diphosphate. The protein is Arginine--tRNA ligase of Limosilactobacillus reuteri (strain DSM 20016) (Lactobacillus reuteri).